A 202-amino-acid chain; its full sequence is MIASLRGTVLDIQLDHAVLECAGVGYKVLATPAMLGTLQRGEEARVMTTLVVKEDSMTLYGFTSQDDRDMFHVLQTVSGLGPKLALAALSVMSAGDLAQAIAGEEAARLQKIPGVGKRVAQRLILELKDKVKAFAPAESADLSSAAPAAAGPVVEDVVEALIGLGFTDKMARPVVESVVAEQPDAATPVVLRAALSQLGAKK.

The interval 1–63 is domain I; sequence MIASLRGTVL…EDSMTLYGFT (63 aa). Residues 64–142 are domain II; it reads SQDDRDMFHV…AFAPAESADL (79 aa). The tract at residues 143-148 is flexible linker; the sequence is SSAAPA. The segment at 149–202 is domain III; the sequence is AAGPVVEDVVEALIGLGFTDKMARPVVESVVAEQPDAATPVVLRAALSQLGAKK.

Belongs to the RuvA family. Homotetramer. Forms an RuvA(8)-RuvB(12)-Holliday junction (HJ) complex. HJ DNA is sandwiched between 2 RuvA tetramers; dsDNA enters through RuvA and exits via RuvB. An RuvB hexamer assembles on each DNA strand where it exits the tetramer. Each RuvB hexamer is contacted by two RuvA subunits (via domain III) on 2 adjacent RuvB subunits; this complex drives branch migration. In the full resolvosome a probable DNA-RuvA(4)-RuvB(12)-RuvC(2) complex forms which resolves the HJ.

It localises to the cytoplasm. In terms of biological role, the RuvA-RuvB-RuvC complex processes Holliday junction (HJ) DNA during genetic recombination and DNA repair, while the RuvA-RuvB complex plays an important role in the rescue of blocked DNA replication forks via replication fork reversal (RFR). RuvA specifically binds to HJ cruciform DNA, conferring on it an open structure. The RuvB hexamer acts as an ATP-dependent pump, pulling dsDNA into and through the RuvAB complex. HJ branch migration allows RuvC to scan DNA until it finds its consensus sequence, where it cleaves and resolves the cruciform DNA. This Corynebacterium aurimucosum (strain ATCC 700975 / DSM 44827 / CIP 107346 / CN-1) (Corynebacterium nigricans) protein is Holliday junction branch migration complex subunit RuvA.